The following is a 398-amino-acid chain: Small ribosomal subunit protein mS78 (rPPR3a) (398 aa).

The N-terminal 19 residues, 1-19 (MSSLSRVLRGTFNTCPIRR), are a transit peptide targeting the mitochondrion. PPR repeat units follow at residues 108–142 (KEGFAARIISLYGKAGMFENAQKVFEEMPNRDCKR), 143–173 (SVLSFNALLSAYRLSKKFDVVEELFNELPGK), 179–213 (DIVSYNTLIKALCEKDSLPEAVALLDEIENKGLKP), 214–248 (DIVTFNTLLLSSYLKGQFELGEEIWAKMVEKNVAI), 249–283 (DIRTYNARLLGLANEAKSKELVNLFGELKASGLKP), 284–318 (DVFSFNAMIRGSINEGKMDEAEAWYKEIVKHGYRP), and 319–353 (DKATFALLLPAMCKAGDFESAIELFKETFSKRYLV).

The protein belongs to the PPR family. P subfamily. As to quaternary structure, component of the mitochondrial ribosome small subunit.

It is found in the mitochondrion. This is Small ribosomal subunit protein mS78 (rPPR3a) from Arabidopsis thaliana (Mouse-ear cress).